Consider the following 89-residue polypeptide: uncharacterized protein (89 aa).

A disordered region spans residues 31–89 (TPQPLEPHEHPKPMEPNEFDPKPDDPPRNPDPSPFPNEVPKPKPSDFPIPDELYPQPIV). Over residues 36-58 (EPHEHPKPMEPNEFDPKPDDPPR) the composition is skewed to basic and acidic residues. The segment covering 59 to 69 (NPDPSPFPNEV) has biased composition (pro residues).

This is an uncharacterized protein from Dictyostelium discoideum (Social amoeba).